We begin with the raw amino-acid sequence, 593 residues long: MEMYETLGKVGEGSYGTVMKCKHKDTGRIVAIKIFYEKPEKSVNKIATREIKFLKQFRHENLVNLIEVFRQKKKIHLVFEFIDHTVLDELQHYCHGLESKRLRKYLFQILRAIEYLHNNNIIHRDIKPENILVSQSGITKLCDFGFARTLAAPGDVYTDYVATRWYRAPELVLKDTTYGKPVDIWALGCMIIEMATGNPYLPSSSDLDLLHKIVLKVGNLTPHLHNIFSKSPIFAGVVLPQVQHPKNARKKYPKLNGLLADIVHACLQIDPAERISSTDLLHHDYFTRDGFIEKFIPELRAKLLQEAKVNSFIKPKENFKENEPVRDEKKPVFTNPLLYGNPTLYGKEVDRDKRAKELKVRVIKAKGGKGDVPDLKKTESEGEHRQQGTAEDTHPTSLDRKPSVSELTNPVHPSANSDTVKEDPHSGGCMIMPPINLTSSNLLAANPSSNLSHPNSRLTERTKKRRTSSQTIGQTLSNSRQEDTGPTQVQTEKGAFNERTGQNDQIASGNKRKLNFSKCDRKEFHFPELPFTIQAKEMKGMEVKQIKVLKRESKKTDSPKIPTLLSMDSNQEKQEVFNIFPGWCKRGNLNWPS.

The 283-residue stretch at 4–286 (YETLGKVGEG…STDLLHHDYF (283 aa)) folds into the Protein kinase domain. ATP contacts are provided by residues 10–18 (VGEGSYGTV) and lysine 33. The [NKR]KIAxRE signature appears at 45–51 (KIATREI). Aspartate 125 (proton acceptor) is an active-site residue. Residue threonine 158 is modified to Phosphothreonine. Tyrosine 160 carries the post-translational modification Phosphotyrosine. A compositionally biased stretch (basic and acidic residues) spans 368–403 (GKGDVPDLKKTESEGEHRQQGTAEDTHPTSLDRKPS). Residues 368–512 (GKGDVPDLKK…NDQIASGNKR (145 aa)) are disordered. The span at 436–452 (NLTSSNLLAANPSSNLS) shows a compositional bias: low complexity. Composition is skewed to polar residues over residues 468–491 (SSQT…QVQT) and 499–508 (RTGQNDQIAS).

It belongs to the protein kinase superfamily. CMGC Ser/Thr protein kinase family. CDC2/CDKX subfamily. Highly expressed in brain, and to a lower extent in heart and testis.

The protein resides in the nucleus. Its subcellular location is the cytoplasm. It catalyses the reaction L-seryl-[protein] + ATP = O-phospho-L-seryl-[protein] + ADP + H(+). It carries out the reaction L-threonyl-[protein] + ATP = O-phospho-L-threonyl-[protein] + ADP + H(+). In Rattus norvegicus (Rat), this protein is Cyclin-dependent kinase-like 3.